The chain runs to 109 residues: Nucleoid-associated protein MS1507 (109 aa).

The disordered stretch occupies residues 1 to 21 (MFGKGGLGNLMKQAQQMQERM).

It belongs to the YbaB/EbfC family. As to quaternary structure, homodimer.

It localises to the cytoplasm. Its subcellular location is the nucleoid. In terms of biological role, binds to DNA and alters its conformation. May be involved in regulation of gene expression, nucleoid organization and DNA protection. This is Nucleoid-associated protein MS1507 from Mannheimia succiniciproducens (strain KCTC 0769BP / MBEL55E).